The sequence spans 762 residues: Dolichyl-phosphate-mannose--protein mannosyltransferase 4 (762 aa).

Residues 1–10 (MSVPKKRNHG) are compositionally biased toward basic residues. Residues 1–24 (MSVPKKRNHGKLPPSTKDVDDPSL) are disordered. Residues 1 to 53 (MSVPKKRNHGKLPPSTKDVDDPSLKYTKAAPKCEQVAEHWLLQPLPEPESRYS) lie on the Lumenal side of the membrane. Residues 54-74 (FWVTIVTLLAFAARFYKIWYP) form a helical membrane-spanning segment. The Cytoplasmic segment spans residues 75–136 (KEVVFDEVHF…IGYSYETHPA (62 aa)). The chain crosses the membrane as a helical span at residues 137 to 157 (PYIAYRSFNAILGTLTVPIMF). The Lumenal portion of the chain corresponds to 158-166 (NTLKELNFR). Residues 167 to 187 (AITCAFASLLVAIDTAHVTET) form a helical membrane-spanning segment. Topologically, residues 188–189 (RL) are cytoplasmic. Residues 190–210 (ILLDAILIISIAATMYCYVRF) form a helical membrane-spanning segment. Over 211 to 217 (YKCQLRQ) the chain is Lumenal. A helical transmembrane segment spans residues 218–238 (PFTWSWYIWLHATGLSLSFVI). Residues 239–242 (STKY) lie on the Cytoplasmic side of the membrane. A helical membrane pass occupies residues 243–263 (VGVMTYSAIGFAAVVNLWQLL). Over 264 to 283 (DIKAGLSLRQFMRHFSKRLN) the chain is Lumenal. A helical membrane pass occupies residues 284–304 (GLVLIPFVIYLFWFWVHFTVL). Residues 305-593 (NTSGPGDAFM…NGDEKKQIYF (289 aa)) are Cytoplasmic-facing. MIR domains lie at 331 to 391 (SKTV…VLPP), 399 to 458 (GQAV…FQPL), and 464 to 521 (GHVL…VDEI). A helical transmembrane segment spans residues 594–614 (IGNIIGWWFQVISLAVFVGII). Over 615–635 (VADLITRHRGYYALNKMTREK) the chain is Lumenal. Residues 636–656 (LYGPLMFFFVSWCCHYFPFFL) traverse the membrane as a helical segment. At 657 to 716 (MARQKFLHHYLPAHLIACLFSGALWEVIFSDCKSLDLEKDEDISGASYERNPKVYVKPYT) the chain is on the cytoplasmic side. Residues 717–737 (VFLVCVSCAVAWFFVYFSPLV) traverse the membrane as a helical segment. Topologically, residues 738–762 (YGDVSLSPSEVVSREWFDIELNFSK) are lumenal. Residue Asn759 is glycosylated (N-linked (GlcNAc...) asparagine).

This sequence belongs to the glycosyltransferase 39 family. Forms a functional homodimer and may form a heterodimer with PMT6. Interacts with RCR1.

The protein resides in the endoplasmic reticulum membrane. It carries out the reaction a di-trans,poly-cis-dolichyl beta-D-mannosyl phosphate + L-seryl-[protein] = 3-O-(alpha-D-mannosyl)-L-seryl-[protein] + a di-trans,poly-cis-dolichyl phosphate + H(+). It catalyses the reaction a di-trans,poly-cis-dolichyl beta-D-mannosyl phosphate + L-threonyl-[protein] = 3-O-(alpha-D-mannosyl)-L-threonyl-[protein] + a di-trans,poly-cis-dolichyl phosphate + H(+). It participates in protein modification; protein glycosylation. Functionally, protein O-mannosyltransferase involved in O-glycosylation which is essential for cell wall rigidity. Forms a homodimeric complex to transfer mannose from Dol-P-mannose to Ser or Thr residues on proteins. Specifically acts on secretory proteins with an ER-luminally oriented Ser/Thr-rich region flanked by a membrane anchor such as FUS1, AXL2, GAS1, KEX2, MID2, WSC1, WSC2, OPY2, PRM5, RAX2, or YNL176. The chain is Dolichyl-phosphate-mannose--protein mannosyltransferase 4 from Saccharomyces cerevisiae (strain ATCC 204508 / S288c) (Baker's yeast).